Consider the following 484-residue polypeptide: UDP-N-acetylmuramoyl-L-alanyl-D-glutamate--2,6-diaminopimelate ligase (484 aa).

Residue Ser30 coordinates UDP-N-acetyl-alpha-D-muramoyl-L-alanyl-D-glutamate. Residue 109 to 115 (GTNGKTS) coordinates ATP. Residues 151–152 (TT), Ser178, and Arg186 each bind UDP-N-acetyl-alpha-D-muramoyl-L-alanyl-D-glutamate. An N6-carboxylysine modification is found at Lys218. Meso-2,6-diaminopimelate contacts are provided by residues Arg379, 403–406 (DNPR), Gly455, and Glu459. The Meso-diaminopimelate recognition motif signature appears at 403-406 (DNPR).

Belongs to the MurCDEF family. MurE subfamily. The cofactor is Mg(2+). Post-translationally, carboxylation is probably crucial for Mg(2+) binding and, consequently, for the gamma-phosphate positioning of ATP.

It is found in the cytoplasm. It catalyses the reaction UDP-N-acetyl-alpha-D-muramoyl-L-alanyl-D-glutamate + meso-2,6-diaminopimelate + ATP = UDP-N-acetyl-alpha-D-muramoyl-L-alanyl-gamma-D-glutamyl-meso-2,6-diaminopimelate + ADP + phosphate + H(+). Its pathway is cell wall biogenesis; peptidoglycan biosynthesis. Functionally, catalyzes the addition of meso-diaminopimelic acid to the nucleotide precursor UDP-N-acetylmuramoyl-L-alanyl-D-glutamate (UMAG) in the biosynthesis of bacterial cell-wall peptidoglycan. In Clostridioides difficile (strain 630) (Peptoclostridium difficile), this protein is UDP-N-acetylmuramoyl-L-alanyl-D-glutamate--2,6-diaminopimelate ligase.